The following is a 226-amino-acid chain: Translation initiation factor IF-3 (226 aa).

The segment at 195–226 (FVPLAPLSPEDLIEEPELESESDSDAEPESDN) is disordered. The segment covering 205–226 (DLIEEPELESESDSDAEPESDN) has biased composition (acidic residues).

The protein belongs to the IF-3 family. As to quaternary structure, monomer.

It localises to the cytoplasm. In terms of biological role, IF-3 binds to the 30S ribosomal subunit and shifts the equilibrium between 70S ribosomes and their 50S and 30S subunits in favor of the free subunits, thus enhancing the availability of 30S subunits on which protein synthesis initiation begins. This is Translation initiation factor IF-3 from Chlorobium chlorochromatii (strain CaD3).